Reading from the N-terminus, the 240-residue chain is Orotidine 5'-phosphate decarboxylase (240 aa).

Substrate is bound by residues aspartate 16, lysine 37, 64–73 (DLKFHDIPTT), threonine 128, arginine 190, glutamine 199, glycine 219, and arginine 220. Catalysis depends on lysine 66, which acts as the Proton donor.

Belongs to the OMP decarboxylase family. Type 1 subfamily. As to quaternary structure, homodimer.

The catalysed reaction is orotidine 5'-phosphate + H(+) = UMP + CO2. It participates in pyrimidine metabolism; UMP biosynthesis via de novo pathway; UMP from orotate: step 2/2. Its function is as follows. Catalyzes the decarboxylation of orotidine 5'-monophosphate (OMP) to uridine 5'-monophosphate (UMP). The chain is Orotidine 5'-phosphate decarboxylase from Prochlorococcus marinus (strain SARG / CCMP1375 / SS120).